The chain runs to 354 residues: MSKVKSITRESWILSTFPEWGSWLNEEIEQEQVAPGTFAMWWLGCTGIWLKSEGGTNVCVDFWCGTGKQSHGNPLMKQGHQMQRMAGVKKLQPNLRTPPFVLDPFAIRQIDAVLATHDHNDHIDVNVAAAVMQNCADDVPFIGPKTCVDLWIGWGVPKERCIVVKPGDVVKVKDIEIHALDAFDRTALITLPADQKAAGVLPDGMDDRAVNYLFKTPGGSLYHSGDSHYSNYYAKHGNEHQIDVALGSYGENPRGITDKMTSADMLRMGEALNAKVVIPFHHDIWSNFQAAPQEIRVQWEMKKDRLKYGFKPFIWQVGGKFTWPLDKDNFEYHYPRGFDDCFTIEPDLPFKSFL.

This sequence belongs to the UlaG family. It depends on a divalent metal cation as a cofactor.

The protein localises to the cytoplasm. It catalyses the reaction L-ascorbate 6-phosphate + H2O = 3-dehydro-L-gulonate 6-phosphate. It participates in cofactor degradation; L-ascorbate degradation; D-xylulose 5-phosphate from L-ascorbate: step 1/4. Probably catalyzes the hydrolysis of L-ascorbate-6-P into 3-keto-L-gulonate-6-P. Is essential for L-ascorbate utilization under anaerobic conditions. This Shigella boydii serotype 4 (strain Sb227) protein is Probable L-ascorbate-6-phosphate lactonase UlaG.